The primary structure comprises 373 residues: GTPase Obg (373 aa).

The Obg domain maps to 1 to 159; it reads MKFIDEARIE…RMVRLELKVL (159 aa). Positions 128 to 147 are disordered; that stretch reads LHFKSSTNRAPRQKTDGKPG. In terms of domain architecture, OBG-type G spans 160 to 334; that stretch reads ADVGLLGMPN…LCYAVFDHIS (175 aa). GTP contacts are provided by residues 166–173, 191–195, 213–216, 284–287, and 315–317; these read GMPNAGKS, FTTLA, DIPG, NKLD, and SAL. Residues serine 173 and threonine 193 each contribute to the Mg(2+) site. Residues 354 to 373 form a disordered region; that stretch reads FREKPQAPAAADDAGTDPQV. Residues 359–373 are compositionally biased toward low complexity; the sequence is QAPAAADDAGTDPQV.

The protein belongs to the TRAFAC class OBG-HflX-like GTPase superfamily. OBG GTPase family. In terms of assembly, monomer. The cofactor is Mg(2+).

The protein resides in the cytoplasm. Its function is as follows. An essential GTPase which binds GTP, GDP and possibly (p)ppGpp with moderate affinity, with high nucleotide exchange rates and a fairly low GTP hydrolysis rate. Plays a role in control of the cell cycle, stress response, ribosome biogenesis and in those bacteria that undergo differentiation, in morphogenesis control. In Paraburkholderia phytofirmans (strain DSM 17436 / LMG 22146 / PsJN) (Burkholderia phytofirmans), this protein is GTPase Obg.